The chain runs to 126 residues: MMPGGATVTVRLVRSFEHRNFRPVVYHGVNLDQTVREFIVQINEDIPHRAALPLPFKKYSYDTLKIIHQPHGAKTNELVVGLEDDERLILAPGGTLREAGVAHETELAFFCHKDYQTYKANPVSKW.

Belongs to the UPF0538 family.

This is UPF0538 protein C2orf76 homolog from Xenopus tropicalis (Western clawed frog).